The chain runs to 160 residues: Small ribosomal subunit protein uS19v (160 aa).

This sequence belongs to the universal ribosomal protein uS19 family.

It is found in the cytoplasm. In Arabidopsis thaliana (Mouse-ear cress), this protein is Small ribosomal subunit protein uS19v (RPS15F).